The chain runs to 331 residues: Anthranilate phosphoribosyltransferase (331 aa).

Residues G79, 82 to 83 (GD), T87, 89 to 92 (NIST), 107 to 115 (KHGNYGATS), and A119 each bind 5-phospho-alpha-D-ribose 1-diphosphate. Residue G79 participates in anthranilate binding. S91 lines the Mg(2+) pocket. Residue N110 participates in anthranilate binding. R165 is an anthranilate binding site. D223 and E224 together coordinate Mg(2+).

Belongs to the anthranilate phosphoribosyltransferase family. In terms of assembly, homodimer. Requires Mg(2+) as cofactor.

The catalysed reaction is N-(5-phospho-beta-D-ribosyl)anthranilate + diphosphate = 5-phospho-alpha-D-ribose 1-diphosphate + anthranilate. The protein operates within amino-acid biosynthesis; L-tryptophan biosynthesis; L-tryptophan from chorismate: step 2/5. Its function is as follows. Catalyzes the transfer of the phosphoribosyl group of 5-phosphorylribose-1-pyrophosphate (PRPP) to anthranilate to yield N-(5'-phosphoribosyl)-anthranilate (PRA). The sequence is that of Anthranilate phosphoribosyltransferase from Bacteroides fragilis (strain ATCC 25285 / DSM 2151 / CCUG 4856 / JCM 11019 / LMG 10263 / NCTC 9343 / Onslow / VPI 2553 / EN-2).